We begin with the raw amino-acid sequence, 557 residues long: Probable asparagine synthetase [glutamine-hydrolyzing] (557 aa).

Cys2 (for GATase activity) is an active-site residue. Positions 2-188 (CGILAILNSL…PGHYFSSKTK (187 aa)) constitute a Glutamine amidotransferase type-2 domain. L-glutamine-binding positions include 50–54 (RLAIV), 75–77 (NGE), and Asp101. In terms of domain architecture, Asparagine synthetase spans 217–466 (AIKEAFEQAV…LPSSVLWRQK (250 aa)). ATP-binding positions include Leu239, Ile279, and 353–354 (SG). The interval 538-557 (WGASQDPSGRAQKVHLSTTE) is disordered.

It carries out the reaction L-aspartate + L-glutamine + ATP + H2O = L-asparagine + L-glutamate + AMP + diphosphate + H(+). The protein operates within amino-acid biosynthesis; L-asparagine biosynthesis; L-asparagine from L-aspartate (L-Gln route): step 1/1. This chain is Probable asparagine synthetase [glutamine-hydrolyzing] (asns), found in Dictyostelium discoideum (Social amoeba).